The primary structure comprises 199 residues: Charged multivesicular body protein 1B2 (199 aa).

Residues 15 to 47 adopt a coiled-coil conformation; that stretch reads AKELNRNAKKCDKEEKAEKAKIKKAIQKGNTEV. The tract at residues 132–156 is interaction with IST1; that stretch reads MEDTMSSTTTLTTPQNQVDMLLQEM. The segment at 167 to 199 is disordered; that stretch reads ELPQGQTGSVGASVASTEQDELSQRLARLRDQV. Residues 170–183 are compositionally biased toward polar residues; that stretch reads QGQTGSVGASVAST. The interval 174-199 is interaction with SPAST; that stretch reads GSVGASVASTEQDELSQRLARLRDQV. The stretch at 177-199 forms a coiled coil; it reads GASVASTEQDELSQRLARLRDQV. Residues 180-196 form an interaction with VPS4A, MITD1 and STAMBP region; the sequence is VASTEQDELSQRLARLR. An interaction with VTA1 region spans residues 180-199; sequence VASTEQDELSQRLARLRDQV. The segment at 183 to 199 is interaction with VPS4B; that stretch reads TEQDELSQRLARLRDQV. The short motif at 186 to 196 is the MIT-interacting motif element; sequence DELSQRLARLR.

It belongs to the SNF7 family. In terms of assembly, probable peripherally associated component of the endosomal sorting required for transport complex III (ESCRT-III). ESCRT-III components are thought to multimerize to form a flat lattice on the perimeter membrane of the endosome. Several assembly forms of ESCRT-III may exist that interact and act sequentially. Interacts with CHMP1A. Interacts with VTA1; the interaction probably involves the open conformation of CHMP1B. Interacts with CHMP2A. Interacts with VPS4A; the interaction is direct. Interacts with VPS4B; the interaction is direct. Interacts with SPAST (via MIT domain); the interaction is direct. Interacts with IST1. Interacts with MITD1. Interacts with STAMBP.

Its subcellular location is the cytoplasm. The protein localises to the cytosol. The protein resides in the endosome. It is found in the late endosome membrane. Probable peripherally associated component of the endosomal sorting required for transport complex III (ESCRT-III) which is involved in multivesicular bodies (MVBs) formation and sorting of endosomal cargo proteins into MVBs. MVBs contain intraluminal vesicles (ILVs) that are generated by invagination and scission from the limiting membrane of the endosome and mostly are delivered to lysosomes enabling degradation of membrane proteins, such as stimulated growth factor receptors, lysosomal enzymes and lipids. The MVB pathway appears to require the sequential function of ESCRT-O, -I,-II and -III complexes. ESCRT-III proteins mostly dissociate from the invaginating membrane before the ILV is released. The ESCRT machinery also functions in topologically equivalent membrane fission events, such as the terminal stages of cytokinesis. ESCRT-III proteins are believed to mediate the necessary vesicle extrusion and/or membrane fission activities, possibly in conjunction with the AAA ATPase VPS4. Involved in cytokinesis. Involved in recruiting VPS4A and/or VPS4B and SPAST to the midbody of dividing cells. This is Charged multivesicular body protein 1B2 from Mus musculus (Mouse).